A 258-amino-acid chain; its full sequence is Tryptophan synthase alpha chain (258 aa).

Residues Glu52 and Asp63 each act as proton acceptor in the active site.

Belongs to the TrpA family. In terms of assembly, tetramer of two alpha and two beta chains.

The enzyme catalyses (1S,2R)-1-C-(indol-3-yl)glycerol 3-phosphate + L-serine = D-glyceraldehyde 3-phosphate + L-tryptophan + H2O. It functions in the pathway amino-acid biosynthesis; L-tryptophan biosynthesis; L-tryptophan from chorismate: step 5/5. Its function is as follows. The alpha subunit is responsible for the aldol cleavage of indoleglycerol phosphate to indole and glyceraldehyde 3-phosphate. This Streptococcus pneumoniae serotype 19F (strain G54) protein is Tryptophan synthase alpha chain.